Here is a 96-residue protein sequence, read N- to C-terminus: Molybdopterin synthase sulfur carrier subunit (96 aa).

At Gly96 the chain carries 1-thioglycine; alternate. Gly96 carries the post-translational modification Glycyl adenylate; alternate.

This sequence belongs to the MoaD family. MOCS2A subfamily. As to quaternary structure, heterotetramer; composed of 2 small (MOCS2A) and 2 large (MOCS2B) subunits. Post-translationally, C-terminal thiocarboxylation occurs in 2 steps, it is first acyl-adenylated (-COAMP) via the hesA/moeB/thiF part of UBA4, then thiocarboxylated (-COSH) via the rhodanese domain of UBA4.

It is found in the cytoplasm. It participates in cofactor biosynthesis; molybdopterin biosynthesis. In terms of biological role, acts as a sulfur carrier required for molybdopterin biosynthesis. Component of the molybdopterin synthase complex that catalyzes the conversion of precursor Z into molybdopterin by mediating the incorporation of 2 sulfur atoms into precursor Z to generate a dithiolene group. In the complex, serves as sulfur donor by being thiocarboxylated (-COSH) at its C-terminus by UBA4. After interaction with MOCS2B, the sulfur is then transferred to precursor Z to form molybdopterin. The chain is Molybdopterin synthase sulfur carrier subunit from Phaeosphaeria nodorum (strain SN15 / ATCC MYA-4574 / FGSC 10173) (Glume blotch fungus).